Here is a 100-residue protein sequence, read N- to C-terminus: MKTLSEIKEILRKHKKILKDKYKVKSIALFGSYARGEQTEESDIDIMVEFDENNYPSFSEYLELIEYLEKILGLKVDLITKKSIHNPYVKKSIEEDLIYV.

A GSX(10)DXD motif motif is present at residues 31-45 (GSYARGEQTEESDID). Mg(2+) is bound by residues aspartate 43, aspartate 45, and aspartate 77.

Belongs to the MntA antitoxin family. As to quaternary structure, probably forms a complex with cognate toxin MJ1380. The cofactor is Mg(2+).

It carries out the reaction L-tyrosyl-[protein] + ATP = O-(5'-adenylyl)-L-tyrosyl-[protein] + diphosphate. The enzyme catalyses O-(5'-adenylyl)-L-tyrosyl-[protein] + ATP = O-[5'-(adenylyl-(5'-&gt;3')-adenylyl)]-L-tyrosyl-[protein] + diphosphate. Functionally, probable antitoxin component of a putative type VII toxin-antitoxin (TA) system. Neutralizes cognate toxic MJ1380 by di-AMPylation. In Methanocaldococcus jannaschii (strain ATCC 43067 / DSM 2661 / JAL-1 / JCM 10045 / NBRC 100440) (Methanococcus jannaschii), this protein is Putative protein adenylyltransferase MJ1379.